Consider the following 384-residue polypeptide: Glycerol 3-phosphate oxidase (384 aa).

Positions 1–15 are cleaved as a signal peptide; sequence METRDVLIVGGGVIG. Residue I14 participates in FAD binding. C16 is lipidated: N-palmitoyl cysteine. The S-diacylglycerol cysteine moiety is linked to residue C16. Residues E33, 42 to 43, and 47 to 49 each bind FAD; these read TS and SGV. Sn-glycerol 3-phosphate-binding residues include S47 and H51. The Proton acceptor role is filled by H51. An FAD-binding site is contributed by V177. K258 and R320 together coordinate sn-glycerol 3-phosphate. Residue 346-347 participates in FAD binding; sequence MK. A sn-glycerol 3-phosphate-binding site is contributed by S348. T352 lines the FAD pocket.

In terms of assembly, monomer. The cofactor is FAD.

Its subcellular location is the cytoplasm. The protein localises to the cell membrane. It catalyses the reaction sn-glycerol 3-phosphate + O2 = dihydroxyacetone phosphate + H2O2. It participates in polyol metabolism; glycerol degradation via glycerol kinase pathway; glycerone phosphate from sn-glycerol 3-phosphate (aerobic route): step 1/1. Catalyzes the oxidation of glycerol 3-phosphate to dihydroxyacetone phosphate (DHAP), with a reduction of O2 to H2O2. The formation of hydrogen peroxide by this enzyme is crucial for cytotoxic effects of M.pneumoniae on host cells. Is involved in the metabolism of glycerol and is essential for glycerol utilization; glycerol is one of the few carbon sources that can be utilized by M.pneumoniae for growth. To a lesser extent, is also able to use glyceraldehyde 3-phosphate (GAP), an intermediate in the glycolysis pathway, as a substrate (but the structure of the product has not been elucidated). Therefore, in the absence of glycerol, GAP may serve as a substrate in the GlpO reaction to supply H2O2 during mycoplasma infection. Does not show any dehydrogenase activity with NAD(+). The polypeptide is Glycerol 3-phosphate oxidase (Mycoplasma pneumoniae (strain ATCC 29342 / M129 / Subtype 1) (Mycoplasmoides pneumoniae)).